We begin with the raw amino-acid sequence, 500 residues long: Cytochrome P450 71B35 (500 aa).

Residues 1–21 (MAHIWLLPLIFLVCILLAVFN) traverse the membrane as a helical segment. Cysteine 439 provides a ligand contact to heme.

The protein belongs to the cytochrome P450 family. It depends on heme as a cofactor.

The protein localises to the membrane. The sequence is that of Cytochrome P450 71B35 (CYP71B35) from Arabidopsis thaliana (Mouse-ear cress).